Reading from the N-terminus, the 360-residue chain is Putative transcription factor A494R (360 aa).

A zinc finger lies at 153–175 (CTCGGQMELWVNSTQSDLVCNEC).

The protein belongs to the nucleo-cytoplasmic large DNA viruses (NCLDVs) VLTF-3 family.

In terms of biological role, putative transcription factor. The chain is Putative transcription factor A494R from Paramecium bursaria Chlorella virus 1 (PBCV-1).